A 303-amino-acid polypeptide reads, in one-letter code: DnaJ homolog subfamily C member 17 (303 aa).

One can recognise a J domain in the interval 11–76 (DLYALLGIEE…AARAAYDKVR (66 aa)). 2 stretches are compositionally biased toward basic and acidic residues: residues 78–106 (ARKQ…RERQ) and 150–166 (IRQD…ENTE). Disordered regions lie at residues 78–124 (ARKQ…TTTL) and 150–170 (IRQD…GKGT). The region spanning 178–249 (KCKKEDESQG…NPLKVSWLEG (72 aa)) is the RRM domain. Position 264 is an N6-methyllysine (K264).

The protein resides in the cytoplasm. It is found in the nucleus. May negatively affect PAX8-induced thyroglobulin/TG transcription. This is DnaJ homolog subfamily C member 17 (Dnajc17) from Rattus norvegicus (Rat).